Here is an 843-residue protein sequence, read N- to C-terminus: Protein P (843 aa).

Positions Met-1 to Gln-177 are terminal protein domain (TP). The tract at residues Glu-178–Leu-346 is spacer. Disordered regions lie at residues Gln-220–Ser-273 and Leu-289–Ser-316. Residues Leu-289–Gly-299 are compositionally biased toward polar residues. The polymerase/reverse transcriptase domain (RT) stretch occupies residues Glu-347–Gln-690. The region spanning Glu-357–Ile-600 is the Reverse transcriptase domain. Mg(2+) is bound by residues Asp-429, Asp-551, and Asp-552.

This sequence belongs to the hepadnaviridae P protein family.

The enzyme catalyses DNA(n) + a 2'-deoxyribonucleoside 5'-triphosphate = DNA(n+1) + diphosphate. The catalysed reaction is Endonucleolytic cleavage to 5'-phosphomonoester.. Activated by host HSP70 and HSP40 in vitro to be able to bind the epsilon loop of the pgRNA. Because deletion of the RNase H region renders the protein partly chaperone-independent, the chaperones may be needed indirectly to relieve occlusion of the RNA-binding site by this domain. Inhibited by several reverse-transcriptase inhibitors: Lamivudine, Adefovir and Entecavir. Its function is as follows. Multifunctional enzyme that converts the viral RNA genome into dsDNA in viral cytoplasmic capsids. This enzyme displays a DNA polymerase activity that can copy either DNA or RNA templates, and a ribonuclease H (RNase H) activity that cleaves the RNA strand of RNA-DNA heteroduplexes in a partially processive 3'- to 5'-endonucleasic mode. Neo-synthesized pregenomic RNA (pgRNA) are encapsidated together with the P protein, and reverse-transcribed inside the nucleocapsid. Initiation of reverse-transcription occurs first by binding the epsilon loop on the pgRNA genome, and is initiated by protein priming, thereby the 5'-end of (-)DNA is covalently linked to P protein. Partial (+)DNA is synthesized from the (-)DNA template and generates the relaxed circular DNA (RC-DNA) genome. After budding and infection, the RC-DNA migrates in the nucleus, and is converted into a plasmid-like covalently closed circular DNA (cccDNA). The activity of P protein does not seem to be necessary for cccDNA generation, and is presumably released from (+)DNA by host nuclear DNA repair machinery. This is Protein P from Hepatitis B virus genotype C subtype ad (isolate Japan/S-179/1988) (HBV-C).